We begin with the raw amino-acid sequence, 186 residues long: Peptidyl-tRNA hydrolase (186 aa).

Tyrosine 14 provides a ligand contact to tRNA. The active-site Proton acceptor is histidine 19. Residues tyrosine 61, asparagine 63, and asparagine 107 each contribute to the tRNA site.

This sequence belongs to the PTH family. Monomer.

The protein localises to the cytoplasm. It carries out the reaction an N-acyl-L-alpha-aminoacyl-tRNA + H2O = an N-acyl-L-amino acid + a tRNA + H(+). Its function is as follows. Hydrolyzes ribosome-free peptidyl-tRNAs (with 1 or more amino acids incorporated), which drop off the ribosome during protein synthesis, or as a result of ribosome stalling. Catalyzes the release of premature peptidyl moieties from peptidyl-tRNA molecules trapped in stalled 50S ribosomal subunits, and thus maintains levels of free tRNAs and 50S ribosomes. In Helicobacter pylori (strain G27), this protein is Peptidyl-tRNA hydrolase.